The chain runs to 773 residues: MKKSSDKSPVRQHDTATQINSDAVSSSTSFTDSDSTCSFLTPSMEFPDRISFRRIDFSEAAPTGVVLPSTSSELTRSNSSENKIPNEDISVSTSSRYLVFDKILALMKKSPGRRGDKTSPARRLDRSDAVRRNIDYDAGEDSSSLLITRSLDFPNRTSFRVDGVDDGEIDRIYQYIGVSGPEDFAISSDAWKARMEHERSSSDVVNKLKSLDLDSREAGPSGGVVASSSMNHKFQGHDLSEAGSIGVVVASNFTLSESNKIENLNSLRDKEIVDGDMVENRCGIERKPTILVKSRGYLVHNDDVGVGGGIKGVRPPVLNVPRADKEVVDGGTVESKSGIEWKPTILVKSKGYLVSNDGGIKGVTSPVLNLRPTDKEVVDSGTVENRRGIKGVRPSVLKPPPVMKLPPVDLPGSSWDILTHFAPDSEIVRRPSSSSSSENGCDEEEAEDDKVEKEETGDMFIQLEDTTDEACSFTTNEGDSSSTVSNTSPICVSGGSINTSWQKGQLLRQGSFGSVYEAISEDGDFFAVKEVSLLDQGSQAQECIQQLEGEIALLSQLEHQNILRYRGTDKDGSNLYIFLELVTQGSLLELYRRYQIRDSLISLYTKQILDGLKYLHHKGFIHRDIKCATILVDANGTVKLADFGLAKVSKLNDIKSRKETLFWMAPEVINRKDNDGYRSPADIWSLGCTVLEMCTGQIPYSDLEPVEALFRIRRGTLPEVPDTLSLDARHFILKCLKLNPEERPTATELLNHPFVRRPLPSSGSGSTSPLIRR.

The segment covering 1-14 has biased composition (basic and acidic residues); the sequence is MKKSSDKSPVRQHD. The disordered stretch occupies residues 1–35; sequence MKKSSDKSPVRQHDTATQINSDAVSSSTSFTDSDS. The span at 21–35 shows a compositional bias: low complexity; the sequence is SDAVSSSTSFTDSDS. S79 and S150 each carry phosphoserine. Positions 100 to 493 are regulatory region; it reads FDKILALMKK…VSNTSPICVS (394 aa). S365 carries the post-translational modification Phosphoserine; by MAPK4. The interval 426–455 is disordered; that stretch reads EIVRRPSSSSSSENGCDEEEAEDDKVEKEE. Positions 440-449 are enriched in acidic residues; that stretch reads GCDEEEAEDD. The 255-residue stretch at 501–755 folds into the Protein kinase domain; that stretch reads WQKGQLLRQG…ATELLNHPFV (255 aa). Residues 507 to 515 and K529 contribute to the ATP site; that span reads LRQGSFGSV. Catalysis depends on D624, which acts as the Proton acceptor. S768 is modified (phosphoserine).

This sequence belongs to the protein kinase superfamily. STE Ser/Thr protein kinase family. MAP kinase kinase kinase subfamily. As to quaternary structure, interacts with MPK4. In terms of processing, phosphorylated by MPK4 upon treatment with flg22. As to expression, expressed at least in rosette leaves (at protein level).

The catalysed reaction is L-seryl-[protein] + ATP = O-phospho-L-seryl-[protein] + ADP + H(+). It carries out the reaction L-threonyl-[protein] + ATP = O-phospho-L-threonyl-[protein] + ADP + H(+). In terms of biological role, triggers SUMM2-mediated immune responses, including cell death and defense responses. Probably inhibited by the MEKK1-MKK1/ MKK2-MPK4 kinase cascade to adjust plant defense. Seems to contribute in transducing external glutamate (L-Glu) signal that elicits large-scale changes in root architecture. The protein is Mitogen-activated protein kinase kinase kinase 9 of Arabidopsis thaliana (Mouse-ear cress).